A 234-amino-acid chain; its full sequence is Glycerol uptake facilitator protein (234 aa).

The next 6 helical transmembrane spans lie at Phe9–Pro29, Gly37–Gly57, Pro61–Ala81, Val83–Leu103, Leu135–Tyr155, and Ala159–Gly179. The short motif at Asn65–Ala67 is the NPA 1 element. Positions Asn186–Ala188 match the NPA 2 motif. A helical transmembrane segment spans residues Trp214–Phe234.

It belongs to the MIP/aquaporin (TC 1.A.8) family.

Its subcellular location is the cell membrane. It carries out the reaction glycerol(in) = glycerol(out). Mediates glycerol diffusion across the cytoplasmic membrane via a pore-type mechanism. This Streptococcus pneumoniae serotype 4 (strain ATCC BAA-334 / TIGR4) protein is Glycerol uptake facilitator protein (glpF).